A 226-amino-acid polypeptide reads, in one-letter code: MRPPPFPKPAHPEEALALQRALAKKVRLAGSLEGVRRIAALDASHKRGRPLVAVALLYDLEKGPLHVATALLPEEALFPYVPGLLSFREAPAYLEALAALPEAPEALLVDGQGVAHPRGLGIASHLGVHLDLPSVGVAKRLLYGRPEAPLPEEKGAAVRLLAPDGRPLGYVYRSRTGVKPLYVSPGHRVGLEEALRFVRRLPTRFRLPEPLRLAHLEAGRALKALD.

Residues Asp42 and Asp110 each contribute to the Mg(2+) site.

The protein belongs to the endonuclease V family. The cofactor is Mg(2+).

Its subcellular location is the cytoplasm. The enzyme catalyses Endonucleolytic cleavage at apurinic or apyrimidinic sites to products with a 5'-phosphate.. Functionally, DNA repair enzyme involved in the repair of deaminated bases. Selectively cleaves double-stranded DNA at the second phosphodiester bond 3' to a deoxyinosine leaving behind the intact lesion on the nicked DNA. This is Endonuclease V from Thermus thermophilus (strain ATCC BAA-163 / DSM 7039 / HB27).